Consider the following 118-residue polypeptide: Large ribosomal subunit protein uL22 (118 aa).

It belongs to the universal ribosomal protein uL22 family. Part of the 50S ribosomal subunit.

Its function is as follows. This protein binds specifically to 23S rRNA; its binding is stimulated by other ribosomal proteins, e.g. L4, L17, and L20. It is important during the early stages of 50S assembly. It makes multiple contacts with different domains of the 23S rRNA in the assembled 50S subunit and ribosome. The globular domain of the protein is located near the polypeptide exit tunnel on the outside of the subunit, while an extended beta-hairpin is found that lines the wall of the exit tunnel in the center of the 70S ribosome. The chain is Large ribosomal subunit protein uL22 from Nostoc punctiforme (strain ATCC 29133 / PCC 73102).